The following is a 280-amino-acid chain: Shikimate kinase (280 aa).

Position 86-96 (86-96 (PPGVGLKGSAA)) interacts with ATP.

Belongs to the GHMP kinase family. Archaeal shikimate kinase subfamily.

It is found in the cytoplasm. The catalysed reaction is shikimate + ATP = 3-phosphoshikimate + ADP + H(+). Its pathway is metabolic intermediate biosynthesis; chorismate biosynthesis; chorismate from D-erythrose 4-phosphate and phosphoenolpyruvate: step 5/7. This is Shikimate kinase (aroK) from Aeropyrum pernix (strain ATCC 700893 / DSM 11879 / JCM 9820 / NBRC 100138 / K1).